Reading from the N-terminus, the 50-residue chain is Protein hunchback (50 aa).

3 consecutive C2H2-type zinc fingers follow at residues 1-5 (HILKH), 11-33 (IRCPECNYTCVNRSMLTSHMKSH), and 39-50 (YRCLDCNYATKY).

It belongs to the hunchback C2H2-type zinc-finger protein family.

It localises to the nucleus. Gap class segmentation protein that controls development of head structures. This Bradysia coprophila (Dark-winged fungus gnat) protein is Protein hunchback (hb).